Here is a 411-residue protein sequence, read N- to C-terminus: Arginine deiminase (411 aa).

C401 (amidino-cysteine intermediate) is an active-site residue.

It belongs to the arginine deiminase family.

It localises to the cytoplasm. The catalysed reaction is L-arginine + H2O = L-citrulline + NH4(+). Its pathway is amino-acid degradation; L-arginine degradation via ADI pathway; carbamoyl phosphate from L-arginine: step 1/2. This chain is Arginine deiminase, found in Staphylococcus aureus (strain MRSA252).